Here is a 415-residue protein sequence, read N- to C-terminus: Membrane-bound ghrelin O-acyltransferase mboat4 (415 aa).

The Lumenal segment spans residues M1 to W6. Residues I7 to F28 traverse the membrane as a helical segment. Residues H29–R42 are Cytoplasmic-facing. A helical transmembrane segment spans residues Y43–M58. Topologically, residues G59–Y61 are lumenal. A helical transmembrane segment spans residues S62–Y78. Residues I79–L84 lie on the Cytoplasmic side of the membrane. A helical membrane pass occupies residues H85–V103. At Q104 to I122 the chain is on the lumenal side. Residues S123 to D138 traverse the membrane as a helical segment. The Cytoplasmic segment spans residues F139–T193. The chain crosses the membrane as a helical span at residues S194–K214. The Lumenal segment spans residues S215–V227. A helical transmembrane segment spans residues L228–M247. Over S248–R312 the chain is Cytoplasmic. Active-site residues include N295 and H326. Residues S313–H326 form a helical membrane-spanning segment. Residues G327 to L328 are Lumenal-facing. Residues H329 to A345 form a helical membrane-spanning segment. Residues D346–R364 are Cytoplasmic-facing. A helical membrane pass occupies residues L365–V385. Topologically, residues E386 to K394 are lumenal. The chain crosses the membrane as a helical span at residues L395 to L415.

This sequence belongs to the membrane-bound acyltransferase family. In terms of assembly, monomer. Not glycosylated.

The protein localises to the endoplasmic reticulum membrane. It catalyses the reaction octanoyl-CoA + L-seryl-[protein] = O-octanoyl-L-seryl-[protein] + CoA. The enzyme catalyses decanoyl-CoA + L-seryl-[protein] = O-decanoyl-L-seryl-[protein] + CoA. It carries out the reaction L-seryl-[protein] + acetyl-CoA = O-acetyl-L-seryl-[protein] + CoA. The catalysed reaction is L-seryl-[protein] + butanoyl-CoA = O-butanoyl-L-seryl-[protein] + CoA. It catalyses the reaction pentanoyl-CoA + L-seryl-[protein] = O-pentanoyl-L-seryl-[protein] + CoA. The enzyme catalyses hexanoyl-CoA + L-seryl-[protein] = O-hexanoyl-L-seryl-[protein] + CoA. It carries out the reaction heptanoyl-CoA + L-seryl-[protein] = O-heptanoyl-L-seryl-[protein] + CoA. The catalysed reaction is nonanoyl-CoA + L-seryl-[protein] = O-nonanoyl-L-seryl-[protein] + CoA. It catalyses the reaction L-seryl-[protein] + dodecanoyl-CoA = O-dodecanoyl-L-seryl-[protein] + CoA. The enzyme catalyses L-seryl-[protein] + tetradecanoyl-CoA = O-tetradecanoyl-L-seryl-[protein] + CoA. It carries out the reaction a fatty acyl-CoA + L-seryl-[protein] = O-fatty acyl-L-seryl-[protein] + CoA. Catalyzes ghrelin acylation at 'Ser-3' using preferentially octanoyl-CoA, hexanoyl-CoA and decanoyl-CoA as acyl-CoA donors leading to ghrelin activity. In vitro uses also acyl-CoA donors of different lengths from short-chain (C2) to long-chain fatty acids (C16) knowing that acyl-CoA donors from butanoyl-CoA (C4) to dodecanoyl-CoA (C12) are more efficient compared to longer acyl-CoA donors, such as myristoyl-CoA (C14) and palmitoyl-CoA (C16) that are not efficient. The polypeptide is Membrane-bound ghrelin O-acyltransferase mboat4 (Danio rerio (Zebrafish)).